Here is an 88-residue protein sequence, read N- to C-terminus: MIKNAFISFQEQKEESRGSVEFQVFSFTNKIRRLTSHLELHRKDYLSQRGLRKILGKRQRLLAYLSKKNRVRYKELINQLNIRELKTR.

Belongs to the universal ribosomal protein uS15 family. In terms of assembly, part of the 30S ribosomal subunit.

It is found in the plastid. Its subcellular location is the chloroplast. This is Small ribosomal subunit protein uS15c (rps15) from Crucihimalaya wallichii (Rock-cress).